The primary structure comprises 486 residues: MTDLVKLTIAQSHKLLKDHKISSAELTKAHLERIEKLEPEIKAFMTVCPETALSQAEAADKAIKQGDIRPLTGIPMALKDVLCTKGIRTTCSSKMLENFVPPYNAHVVDKLAKEGAVLLGKTNMDEFAMGSSTENSAYFTTRNPWNTDKVPGGSSGGSAACVAASEAVFSLGSDTGGSIRQPASFCSVTGYKPSYGMVSRYGLVAFASSLDQIGPFTKDAMDCALVMNAIAGFDDRDSTSVPQTVPDFSSGLDGNIKGFKLGVPKEYFSQNMRPDITEKINDALGVLSGLGASIDREVSLPHTPYALAVYYILAPSEASANLSRYDGVKYGYSYNPTENMWEAMEKTRAKGFGPEVKRRIMIGTYALSAGYYDAWYVKAQKVRTLISQEFNNAFEKYDALITPTTPNLPFSIGEKLNDPFEMYMCDTCTIPINIAGLPAVSIPAGFVDGLPVGLQIIGKPFADQTTMRIAHAFQCATAWHKETPRL.

Active-site charge relay system residues include K79 and S154. S178 acts as the Acyl-ester intermediate in catalysis.

This sequence belongs to the amidase family. GatA subfamily. Heterotrimer of A, B and C subunits.

It catalyses the reaction L-glutamyl-tRNA(Gln) + L-glutamine + ATP + H2O = L-glutaminyl-tRNA(Gln) + L-glutamate + ADP + phosphate + H(+). Functionally, allows the formation of correctly charged Gln-tRNA(Gln) through the transamidation of misacylated Glu-tRNA(Gln) in organisms which lack glutaminyl-tRNA synthetase. The reaction takes place in the presence of glutamine and ATP through an activated gamma-phospho-Glu-tRNA(Gln). The sequence is that of Glutamyl-tRNA(Gln) amidotransferase subunit A from Dehalococcoides mccartyi (strain ATCC BAA-2100 / JCM 16839 / KCTC 5957 / BAV1).